Consider the following 116-residue polypeptide: U16-barytoxin-Tl1a (116 aa).

An N-terminal signal peptide occupies residues Met1–Ala20. The propeptide occupies Lys21 to Arg74. Disulfide bonds link Cys75–Cys90, Cys82–Cys95, and Cys89–Cys110.

Belongs to the neurotoxin 14 (magi-1) family. 06 (ICK-Trit) subfamily. Expressed by the venom gland.

The protein resides in the secreted. Its function is as follows. Ion channel inhibitor. The protein is U16-barytoxin-Tl1a of Trittame loki (Brush-footed trapdoor spider).